Reading from the N-terminus, the 643-residue chain is MPGSTGQPDAGGAGTGTTAGDPGHPHPALAGAEDAAPRPPPEPDDAAAALRLALDQLSALGLGGARPGDEGMATRSADGATECGEDEPAPPDELEVAVAPPVTASVAPGGLPLLDPDVSPRPSPPDVFASFAPHPAALGPSTLLAEQLNVIGSRKKSVNMTECVPVPSSEHVAEIVGRQGCKIKALRAKTNTYIKTPVRGEEPVFIVTGRKEDVEMAKREILSAEHFSLIRATRSKAGGLSGATPGPPNLPGQTTIQVRVPYRVVGLVVGPKGATIKRIQQRTHTYIVTPGRDKEPVFAVTGMPENVDRAREEIEAHITLRTGAFTDSGPDSDFHANGTDVCLDLLGAAASLWAKAPHPGRRPPAATGGLRGDNALGAASTPEPFYVGSRGGPPLPDPSPSSPYGGSGNGGFTFGGDGPSAPTGTATPEDCDFGFDFLALDLTVPATATIWAPFERAAPLPAFSGCPAVNGAPAQPNTGTRRSSGGGAATTPRHSPTLPEPGGLSLELPLARRSVPDPVGAVPWRPPQSALPPFSGSTTFSTTPSLPSTTLASSTLDTVPSEGNHKPSTTAANSSASTAAPGPPSAALARECVVCSEGEAMAALVPCGHNLFCMDCAVRICGKSEPECPACRTPATQAIHIFS.

Disordered regions lie at residues 1–48 (MPGS…DAAA) and 61–92 (GLGG…APPD). A compositionally biased stretch (low complexity) spans 18-34 (TAGDPGHPHPALAGAED). Acidic residues predominate over residues 83–92 (CGEDEPAPPD). KH domains are found at residues 160-221 (MTEC…KREI) and 253-314 (QTTI…REEI). Disordered stretches follow at residues 357-427 (PHPG…GTAT), 471-505 (GAPA…GGLS), and 519-583 (VGAV…APGP). A compositionally biased stretch (gly residues) spans 405-418 (GGSGNGGFTFGGDG). Thr491 is modified (phosphothreonine). Ser495 carries the post-translational modification Phosphoserine. Composition is skewed to low complexity over residues 495–505 (SPTLPEPGGLS), 531–556 (LPPF…SSTL), and 567–583 (PSTT…APGP). An RING-type zinc finger spans residues 592–632 (CVVCSEGEAMAALVPCGHNLFCMDCAVRICGKSEPECPACR).

The protein localises to the cytoplasm. Its subcellular location is the nucleus. In terms of biological role, RNA binding protein, may be involved in post-transcriptional regulatory mechanisms. The polypeptide is RNA-binding protein MEX3D (Mex3d) (Mus musculus (Mouse)).